Here is a 691-residue protein sequence, read N- to C-terminus: 1-butanol dehydrogenase (cytochrome c) (691 aa).

A signal peptide spans 1 to 38 (MLTTTFARKREESVPLRKGIQRALLGLSCLVLSTTSFA). Glu84 lines the pyrroloquinoline quinone pocket. The cysteines at positions 130 and 131 are disulfide-linked. Residues Arg136, Thr181, and 197 to 198 (GA) each bind pyrroloquinoline quinone. Residues Glu199 and Asp322 each contribute to the Ca(2+) site. The active-site Proton acceptor is the Asp322. Pyrroloquinoline quinone is bound by residues Lys349, 408 to 409 (NW), and Val558. Residues 605–684 (DDVAEGTGLY…KIKAFILGTA (80 aa)) form the Cytochrome c domain. Positions 618, 621, 622, and 661 each coordinate heme c.

Belongs to the bacterial PQQ dehydrogenase family. Monomer. The cofactor is pyrroloquinoline quinone. Requires Ca(2+) as cofactor. Heme c is required as a cofactor.

Its subcellular location is the periplasm. It catalyses the reaction butan-1-ol + 2 Fe(III)-[cytochrome c] = butanal + 2 Fe(II)-[cytochrome c] + 2 H(+). With respect to regulation, dehydrogenase activity is increased by ammonium ions. Involved in the metabolism of butane. Could be important in the detoxification of 1-butanol. Catalyzes the oxidation of 1-butanol to butyraldehyde. Also able to use 1-propanol, 2-pentanol, propionaldehyde and butyraldehyde as substrates. In Thauera butanivorans (strain ATCC 43655 / DSM 2080 / JCM 20651 / CCUG 51053 / NBRC 103042 / IAM 12574 / Bu B1211) (Pseudomonas butanovora), this protein is 1-butanol dehydrogenase (cytochrome c).